Here is a 304-residue protein sequence, read N- to C-terminus: N-acetyl-D-glucosamine kinase (304 aa).

ATP contacts are provided by residues 4–11 and 133–140; these read GLDIGGTK and GFGGGFVL. The Zn(2+) site is built by His157, Cys178, Cys180, and Cys185.

It belongs to the ROK (NagC/XylR) family. NagK subfamily.

The catalysed reaction is N-acetyl-D-glucosamine + ATP = N-acetyl-D-glucosamine 6-phosphate + ADP + H(+). It functions in the pathway cell wall biogenesis; peptidoglycan recycling. Its function is as follows. Catalyzes the phosphorylation of N-acetyl-D-glucosamine (GlcNAc) derived from cell-wall degradation, yielding GlcNAc-6-P. The protein is N-acetyl-D-glucosamine kinase of Haemophilus influenzae (strain 86-028NP).